The following is a 471-amino-acid chain: Trimethyllysine dioxygenase (471 aa).

Fe cation-binding residues include His251 and Asp253. A disordered region spans residues 272 to 302; the sequence is KAAPSRPPPPPPPPPPPSEEKEAAGSAAGEA. The span at 276-288 shows a compositional bias: pro residues; the sequence is SRPPPPPPPPPPP. Residue His430 participates in Fe cation binding.

The protein belongs to the gamma-BBH/TMLD family. The cofactor is Fe(2+). Requires L-ascorbate as cofactor.

The protein localises to the cytoplasm. It carries out the reaction N(6),N(6),N(6)-trimethyl-L-lysine + 2-oxoglutarate + O2 = (3S)-3-hydroxy-N(6),N(6),N(6)-trimethyl-L-lysine + succinate + CO2. Its pathway is amine and polyamine biosynthesis; carnitine biosynthesis. Functionally, converts trimethyllysine (TML) into hydroxytrimethyllysine (HTML). The sequence is that of Trimethyllysine dioxygenase (cbs-1) from Neurospora crassa (strain ATCC 24698 / 74-OR23-1A / CBS 708.71 / DSM 1257 / FGSC 987).